The primary structure comprises 94 residues: Cell division topological specificity factor (94 aa).

The protein belongs to the MinE family.

Its function is as follows. Prevents the cell division inhibition by proteins MinC and MinD at internal division sites while permitting inhibition at polar sites. This ensures cell division at the proper site by restricting the formation of a division septum at the midpoint of the long axis of the cell. The polypeptide is Cell division topological specificity factor (Hamiltonella defensa subsp. Acyrthosiphon pisum (strain 5AT)).